A 92-amino-acid polypeptide reads, in one-letter code: MLDLISRVFGRDHSSADIARERLRLVLVHDRTNVSPQFLETLKEELIEVISRYMEIEEEGMDVTLQTAENQVALVANIPVRRMKRAAVGSKR.

It belongs to the MinE family.

Functionally, prevents the cell division inhibition by proteins MinC and MinD at internal division sites while permitting inhibition at polar sites. This ensures cell division at the proper site by restricting the formation of a division septum at the midpoint of the long axis of the cell. This chain is Cell division topological specificity factor, found in Symbiobacterium thermophilum (strain DSM 24528 / JCM 14929 / IAM 14863 / T).